The chain runs to 412 residues: Putative competence-damage inducible protein (412 aa).

It belongs to the CinA family.

The chain is Putative competence-damage inducible protein from Bacillus cereus (strain B4264).